A 544-amino-acid chain; its full sequence is uncharacterized protein (544 aa).

The next 14 helical transmembrane spans lie at 31 to 51 (ILVF…AALA), 52 to 72 (GSVL…IGLL), 84 to 104 (LPWM…QWLI), 116 to 136 (WGLF…YTTV), 162 to 182 (FAFS…IAAG), 191 to 211 (FGEL…WSAL), 230 to 250 (LAPL…AKSF), 257 to 277 (GFDY…GFGF), 318 to 338 (FLFV…TASI), 356 to 376 (TIAL…QALA), 383 to 403 (VIYF…WLVQ), 407 to 427 (VALL…AYLI), 450 to 470 (FFYA…LFLV), and 501 to 521 (FAVA…AIFY).

It belongs to the sodium:galactoside symporter (TC 2.A.2) family.

Its subcellular location is the cell membrane. This is an uncharacterized protein from Synechocystis sp. (strain ATCC 27184 / PCC 6803 / Kazusa).